Here is a 65-residue protein sequence, read N- to C-terminus: Small ribosomal subunit protein eS27 (65 aa).

Zn(2+)-binding residues include Cys-20, Cys-23, Cys-39, and Cys-42. The segment at 20 to 42 (CIDCGNEQIVFSHPATPVRCLVC) adopts a C4-type zinc-finger fold.

Belongs to the eukaryotic ribosomal protein eS27 family. As to quaternary structure, part of the 30S ribosomal subunit. Requires Zn(2+) as cofactor.

The protein is Small ribosomal subunit protein eS27 of Thermococcus kodakarensis (strain ATCC BAA-918 / JCM 12380 / KOD1) (Pyrococcus kodakaraensis (strain KOD1)).